The sequence spans 462 residues: 2-(3-amino-3-carboxypropyl)histidine synthase subunit 1 (462 aa).

The tract at residues 1-87 is disordered; that stretch reads MEEDRRQTDL…AVATAKPRRA (87 aa). Over residues 35–44 the composition is skewed to polar residues; it reads ESAAQTQNGA. Residues C173, C276, and C406 each coordinate [4Fe-4S] cluster.

The protein belongs to the DPH1/DPH2 family. DPH1 subfamily. As to quaternary structure, component of the 2-(3-amino-3-carboxypropyl)histidine synthase complex composed of DPH1, DPH2, DPH3 and a NADH-dependent reductase, predominantly CBR1. [4Fe-4S] cluster is required as a cofactor.

The protein localises to the cytoplasm. It catalyses the reaction L-histidyl-[translation elongation factor 2] + S-adenosyl-L-methionine = 2-[(3S)-amino-3-carboxypropyl]-L-histidyl-[translation elongation factor 2] + S-methyl-5'-thioadenosine + H(+). It participates in protein modification; peptidyl-diphthamide biosynthesis. Its function is as follows. Catalyzes the first step of diphthamide biosynthesis, a post-translational modification of histidine which occurs in elongation factor 2. DPH1 and DPH2 transfer a 3-amino-3-carboxypropyl (ACP) group from S-adenosyl-L-methionine (SAM) to a histidine residue, the reaction is assisted by a reduction system comprising DPH3 and a NADH-dependent reductase, predominantly CBR1. This Gibberella zeae (strain ATCC MYA-4620 / CBS 123657 / FGSC 9075 / NRRL 31084 / PH-1) (Wheat head blight fungus) protein is 2-(3-amino-3-carboxypropyl)histidine synthase subunit 1 (DPH1).